Here is a 615-residue protein sequence, read N- to C-terminus: Medium-chain acyl-CoA ligase ACSF2, mitochondrial (615 aa).

The N-terminal 42 residues, 1-42 (MAVYVGMLRVARLCARSPRVLGARVGLSRVWQEARLWGVRPL), are a transit peptide targeting the mitochondrion. Lysine 179 carries the N6-acetyllysine modification. An N6-acetyllysine; alternate modification is found at lysine 182. The residue at position 182 (lysine 182) is an N6-succinyllysine; alternate. An N6-acetyllysine modification is found at lysine 199. 263–271 (TSGTTGSPK) contributes to the ATP binding site. An N6-acetyllysine mark is found at lysine 340 and lysine 398. Residue lysine 478 is modified to N6-succinyllysine. 2 residues coordinate ATP: aspartate 493 and arginine 508. Lysine 510 is modified (N6-acetyllysine). 2 positions are modified to N6-acetyllysine; alternate: lysine 544 and lysine 570. Residues lysine 544 and lysine 570 each carry the N6-succinyllysine; alternate modification. An ATP-binding site is contributed by lysine 599. Lysine 599 is modified (N6-succinyllysine).

The protein belongs to the ATP-dependent AMP-binding enzyme family.

The protein localises to the mitochondrion. The enzyme catalyses a medium-chain fatty acid + ATP + CoA = a medium-chain fatty acyl-CoA + AMP + diphosphate. It carries out the reaction octanoate + ATP + CoA = octanoyl-CoA + AMP + diphosphate. Functionally, acyl-CoA synthases catalyze the initial reaction in fatty acid metabolism, by forming a thioester with CoA. Has some preference toward medium-chain substrates. Plays a role in adipocyte differentiation. The chain is Medium-chain acyl-CoA ligase ACSF2, mitochondrial from Bos taurus (Bovine).